A 953-amino-acid chain; its full sequence is Glutamate receptor 3.5 (953 aa).

The N-terminal stretch at 1-29 (MGFFVMIRDVSMGFMLLCISALWVLPIQG) is a signal peptide. The Extracellular portion of the chain corresponds to 30-606 (AGRESFSRNS…SPWSFLKPFT (577 aa)). N-linked (GlcNAc...) asparagine glycosylation is found at Asn38, Asn95, Asn223, Asn371, Asn397, Asn436, Asn454, and Asn569. A helical membrane pass occupies residues 607–627 (IEMWAVTGALFLFVGAVIWIL). Topologically, residues 628 to 636 (EHRFNEEFR) are cytoplasmic. Residues 637 to 657 (GPPRRQIITVFWFSFSTMFFS) form a helical membrane-spanning segment. The Cytoplasmic portion of the chain corresponds to 658–668 (HRENTVSTLGR). A helical membrane pass occupies residues 669-689 (FVLLVWLFVVLIINSSYTASL). Over 690–850 (TSILTVQQLT…TENYQISVQS (161 aa)) the chain is Extracellular. Residues 851–871 (FWGLFLICGVVWFIALTLFCW) form a helical membrane-spanning segment. Over 872 to 953 (KVFWQYQRLR…SQSKDHETPQ (82 aa)) the chain is Cytoplasmic. Residues 928–953 (EKSSKKLKDGQSSAENSQSKDHETPQ) are disordered.

It belongs to the glutamate-gated ion channel (TC 1.A.10.1) family. In terms of assembly, may form heteromers. Expressed predominantly in roots. Also detected in shoots.

The protein resides in the membrane. In terms of biological role, glutamate-gated receptor that probably acts as a non-selective cation channel. May be involved in light-signal transduction and calcium homeostasis via the regulation of calcium influx into cells. The protein is Glutamate receptor 3.5 (GLR3.5) of Arabidopsis thaliana (Mouse-ear cress).